Here is a 471-residue protein sequence, read N- to C-terminus: 6-phosphogluconate dehydrogenase, decarboxylating (471 aa).

NADP(+)-binding positions include Gly-10 to Gly-15, Asn-33 to Thr-35, Val-75 to Ala-77, and Asn-103. Substrate-binding positions include Asn-103 and Ser-129–Gly-131. Lys-183 serves as the catalytic Proton acceptor. His-186–Asn-187 is a binding site for substrate. The active-site Proton donor is the Glu-190. Substrate-binding residues include Tyr-191, Lys-263, Arg-290, Arg-449, and His-455.

The protein belongs to the 6-phosphogluconate dehydrogenase family. In terms of assembly, homodimer.

It catalyses the reaction 6-phospho-D-gluconate + NADP(+) = D-ribulose 5-phosphate + CO2 + NADPH. Its pathway is carbohydrate degradation; pentose phosphate pathway; D-ribulose 5-phosphate from D-glucose 6-phosphate (oxidative stage): step 3/3. Catalyzes the oxidative decarboxylation of 6-phosphogluconate to ribulose 5-phosphate and CO(2), with concomitant reduction of NADP to NADPH. This chain is 6-phosphogluconate dehydrogenase, decarboxylating (gnd), found in Synechococcus elongatus (strain ATCC 33912 / PCC 7942 / FACHB-805) (Anacystis nidulans R2).